The following is a 235-amino-acid chain: Orotidine 5'-phosphate decarboxylase (235 aa).

Substrate is bound by residues aspartate 12, lysine 34, 61–70, threonine 116, arginine 177, glutamine 186, and arginine 207; that span reads DMKLLDIDNT. Residue lysine 63 is the Proton donor of the active site.

It belongs to the OMP decarboxylase family. Type 1 subfamily. As to quaternary structure, homodimer.

It catalyses the reaction orotidine 5'-phosphate + H(+) = UMP + CO2. The protein operates within pyrimidine metabolism; UMP biosynthesis via de novo pathway; UMP from orotate: step 2/2. Catalyzes the decarboxylation of orotidine 5'-monophosphate (OMP) to uridine 5'-monophosphate (UMP). The sequence is that of Orotidine 5'-phosphate decarboxylase from Rhizobium etli (strain CIAT 652).